A 435-amino-acid polypeptide reads, in one-letter code: Cell adhesion molecule 2 (435 aa).

A signal peptide spans 1-24 (MIWKRSAVLRFYSVCGLLLQGSQG). Topologically, residues 25–367 (QFPLTQNVTV…ALAGQNGPDH (343 aa)) are extracellular. The Ig-like V-type domain maps to 27-119 (PLTQNVTVVE…PVKTSKAYLT (93 aa)). Asn31 and Asn51 each carry an N-linked (GlcNAc...) asparagine glycan. 3 disulfides stabilise this stretch: Cys44–Cys104, Cys146–Cys203, and Cys248–Cys296. Ig-like C2-type domains follow at residues 127 to 219 (PQIS…VAMQ) and 227 to 312 (PSVK…YVLI). The N-linked (GlcNAc...) asparagine glycan is linked to Asn291. Residues 368-388 (ALIGGIVAVVVFVTLCSIFLL) form a helical membrane-spanning segment. Over 389-435 (GRYLARHKGTYLTNEAKGAEDAPDADTAIINAEGSQVNAEEKKEYFI) the chain is Cytoplasmic. Ser423 is subject to Phosphoserine.

It belongs to the nectin family.

It localises to the cell membrane. The protein localises to the synapse. It is found in the cell projection. The protein resides in the axon. In terms of biological role, adhesion molecule that engages in homo- and heterophilic interactions with the other nectin-like family members, leading to cell aggregation. Important for synapse organization, providing regulated trans-synaptic adhesion. Preferentially binds to oligodendrocytes. (Microbial infection) Induces cell fusion in neuron infected by a neuropathogenic strain of measles. Interacts with measles hemagglutinin to trigger hyperfusogenic F-mediated membrane fusion and presumably transsynaptic cell-to-cell transmission of the virus. This Homo sapiens (Human) protein is Cell adhesion molecule 2 (CADM2).